The sequence spans 463 residues: MTLGQFGGLFVVYLISVIFILSLTWMEFRRVRFNFNVLFSLLYLLTFYFGFPFTCVLVFRFGVDVVPVQFLLQAMLSATAFYAIYYVSYKTRLRQKTSVPRAPLLTVNRVEANLTWLLLALIAVATVGIFFLNNGFLLFKLRSYSQIFSSDVSGVALKRFFYFFIPAMLVVYFLRQTQRAWLMFLIGTVAFGMLTYVIVGGTRANLIIAFALFLFIGIVRGWITLWMLVAAGAFGIVGMFWLALKRYGLDVSGDYAFYTFLYLTRDTFSPWENLALLWQNYDKIEFQGLAPIARDFYVFIPSWLWPDRPNLVLNSANYFTWEVLNNHSGLAISPTLLGSLVVMGGVLFIPLGAIAVGLVIKWFDWVYELGKNDSNRYKAAILQAFCFGAVFNIIVLTREGVDSFVSRVVFFCLVFGLCLLVAKLLYWLLESAGLIRQRLMRMRATPLVPTPNTVPDPVIKEQL.

11 helical membrane passes run phenylalanine 6–methionine 26, phenylalanine 39–phenylalanine 59, valine 65–tyrosine 85, alanine 112–leucine 132, glycine 154–leucine 174, alanine 180–glycine 200, glycine 201–glycine 221, tryptophan 222–leucine 242, leucine 340–isoleucine 360, tyrosine 377–threonine 397, and valine 408–leucine 428.

This sequence belongs to the WzyE family. Probably part of a complex composed of WzxE, WzyE and WzzE.

It localises to the cell inner membrane. Its pathway is bacterial outer membrane biogenesis; enterobacterial common antigen biosynthesis. In terms of biological role, probably involved in the polymerization of enterobacterial common antigen (ECA) trisaccharide repeat units. The protein is Probable ECA polymerase of Pectobacterium carotovorum subsp. carotovorum (strain PC1).